The following is an 84-amino-acid chain: Large ribosomal subunit protein bL31B-2 (84 aa).

This sequence belongs to the bacterial ribosomal protein bL31 family. Type B subfamily. As to quaternary structure, part of the 50S ribosomal subunit.

The polypeptide is Large ribosomal subunit protein bL31B-2 (Streptomyces coelicolor (strain ATCC BAA-471 / A3(2) / M145)).